The sequence spans 929 residues: SCY1-like protein 2 (929 aa).

The Protein kinase domain maps to 32 to 327 (FDVGRHIASG…ADQMTKIPFF (296 aa)). An HEAT repeat occupies 443–479 (DEIKNSVLPMVYRALEAPSIQIQELCLNIIPTFANLI). Residues 661–701 (ESENKEDGLQNKHKRASLTLEEKQKLAKEQEQAQKLKSQQP) are a coiled coil. The residue at position 677 (Ser677) is a Phosphoserine. Residues 684–694 (QKLAKEQEQAQ) are compositionally biased toward basic and acidic residues. Disordered stretches follow at residues 684 to 709 (QKLA…VHTP) and 906 to 929 (NFAQ…DLFG). The segment covering 695-705 (KLKSQQPLKPQ) has biased composition (low complexity). A necessary for interaction with AP2 complex and clathrin, interaction with clathrin is necessary for its targeting to the TGN and endosomal membranes region spans residues 699-929 (QQPLKPQVHT…ASNDLKDLFG (231 aa)). Thr708 is modified (phosphothreonine). The span at 912 to 922 (TTMTNSSSASN) shows a compositional bias: polar residues.

This sequence belongs to the protein kinase superfamily. Interacts with clathrin and AP2B1; the interaction mediates the association with the AP-2 complex. Could autophosphorylate in presence of poly-L-lysine.

The protein localises to the cytoplasmic vesicle. Its subcellular location is the clathrin-coated vesicle. The protein resides in the golgi apparatus. It localises to the trans-Golgi network membrane. It is found in the endosome membrane. Its function is as follows. Component of the AP2-containing clathrin coat that may regulate clathrin-dependent trafficking at plasma membrane, TGN and endosomal system. A possible serine/threonine-protein kinase toward the beta2-subunit of the plasma membrane adapter complex AP2 and other proteins in presence of poly-L-lysine has not been confirmed. By regulating the expression of excitatory receptors at synapses, plays an essential role in neuronal function and signaling and in brain development. The protein is SCY1-like protein 2 of Homo sapiens (Human).